We begin with the raw amino-acid sequence, 802 residues long: LPS-assembly protein LptD (802 aa).

Residues 1–29 form the signal peptide; it reads MARLFSLKPLVLALGFCFGTHCAAADAVA.

The protein belongs to the LptD family. Component of the lipopolysaccharide transport and assembly complex. Interacts with LptE and LptA.

It localises to the cell outer membrane. Functionally, together with LptE, is involved in the assembly of lipopolysaccharide (LPS) at the surface of the outer membrane. This chain is LPS-assembly protein LptD, found in Neisseria meningitidis serogroup A / serotype 4A (strain DSM 15465 / Z2491).